A 181-amino-acid polypeptide reads, in one-letter code: MLRFKELYQQEIIENLQKEFSYKNKHAIPQIKKVVINMGVGEAIADSKVINNAVNDLTLISGQKPVVTLARKSIATFKLRENMKIGCKVTLRKDRMYDFLERLVIVALPRVKEFRGFSYKSFDGKGNFTFGLKEQIVFPEINYDKIDTIRGMDITIVTSAKTDKESKFLLSGFNFPFYNNF.

The protein belongs to the universal ribosomal protein uL5 family. Part of the 50S ribosomal subunit; part of the 5S rRNA/L5/L18/L25 subcomplex. Contacts the 5S rRNA and the P site tRNA. Forms a bridge to the 30S subunit in the 70S ribosome.

This is one of the proteins that bind and probably mediate the attachment of the 5S RNA into the large ribosomal subunit, where it forms part of the central protuberance. In the 70S ribosome it contacts protein S13 of the 30S subunit (bridge B1b), connecting the 2 subunits; this bridge is implicated in subunit movement. Contacts the P site tRNA; the 5S rRNA and some of its associated proteins might help stabilize positioning of ribosome-bound tRNAs. The sequence is that of Large ribosomal subunit protein uL5 from Rickettsia canadensis (strain McKiel).